The chain runs to 369 residues: Core histone macro-H2A.1 (369 aa).

The Histone H2A domain maps to Ser2 to Lys117. N6-lactoyllysine; alternate is present on residues Lys7 and Lys9. At Lys18 the chain carries N6-methyllysine. Residue Lys116 is modified to N6-acetyllysine; alternate. Lys116 is covalently cross-linked (Glycyl lysine isopeptide (Lys-Gly) (interchain with G-Cter in ubiquitin); alternate). Lys117 is covalently cross-linked (Glycyl lysine isopeptide (Lys-Gly) (interchain with G-Cter in ubiquitin)). The residue at position 123 (Lys123) is an N6-acetyllysine; alternate. An N6,N6-dimethyllysine; alternate modification is found at Lys123. Lys123 is covalently cross-linked (Glycyl lysine isopeptide (Lys-Gly) (interchain with G-Cter in SUMO2); alternate). A disordered region spans residues Ile128–Ala180. Thr129 carries the post-translational modification Phosphothreonine. Basic residues predominate over residues Pro144–Lys160. A Glycyl lysine isopeptide (Lys-Gly) (interchain with G-Cter in SUMO2) cross-link involves residue Lys167. Phosphoserine is present on residues Ser170 and Ser173. Thr178 is subject to Phosphothreonine. The Macro domain occupies Thr184–Asp367. Lys189 is covalently cross-linked (Glycyl lysine isopeptide (Lys-Gly) (interchain with G-Cter in SUMO2)). Residues Asp203, Ile204, Val226, Ser275, Gly312, Ser313, Gly314, and Asn316 each contribute to the a glycoprotein site. Residue Lys320 forms a Glycyl lysine isopeptide (Lys-Gly) (interchain with G-Cter in SUMO2) linkage.

This sequence belongs to the histone H2A family. In terms of assembly, the nucleosome is a histone octamer containing two molecules each of H2A, H2B, H3 and H4 assembled in one H3-H4 heterotetramer and two H2A-H2B heterodimers. Interacts with HDAC1 and HDAC2. Interacts with SPOP. Part of a complex consisting of MACROH2A1, CUL3 and SPOP. As to quaternary structure, interacts with PARP1. Monoubiquitinated at either Lys-116 or Lys-117. May also be polyubiquitinated. Ubiquitination is mediated by the CUL3/SPOP E3 complex and does not promote proteasomal degradation. Instead, it is required for enrichment in inactive X chromosome chromatin. As to expression, widely expressed.

It localises to the nucleus. It is found in the chromosome. In terms of biological role, variant histone H2A which replaces conventional H2A in a subset of nucleosomes where it represses transcription. Nucleosomes wrap and compact DNA into chromatin, limiting DNA accessibility to the cellular machineries which require DNA as a template. Histones thereby play a central role in transcription regulation, DNA repair, DNA replication and chromosomal stability. DNA accessibility is regulated via a complex set of post-translational modifications of histones, also called histone code, and nucleosome remodeling. Involved in stable X chromosome inactivation. Inhibits the binding of transcription factors, including NF-kappa-B, and interferes with the activity of remodeling SWI/SNF complexes. Inhibits histone acetylation by EP300 and recruits class I HDACs, which induces a hypoacetylated state of chromatin. Isoform that specifically binds poly-ADP-ribose and O-acetyl-ADP-ribose and plays a key role in NAD(+) metabolism. Able to bind to the ends of poly-ADP-ribose chains created by PARP1 and cap them. This prevents PARP1 from further addition of ADP-ribose and thus limits the consumption of nuclear NAD(+), allowing the cell to maintain proper NAD(+) levels in both the nucleus and the mitochondria to promote proper mitochondrial respiration. Increases the expression of genes involved in redox metabolism, including SOD3. Its function is as follows. In contrast to isoform 1, does not bind poly-ADP-ribose. Represses SOD3 gene expression. The polypeptide is Core histone macro-H2A.1 (Homo sapiens (Human)).